Consider the following 235-residue polypeptide: 1-(5-phosphoribosyl)-5-[(5-phosphoribosylamino)methylideneamino] imidazole-4-carboxamide isomerase (235 aa).

The active-site Proton acceptor is Asp-8. The active-site Proton donor is Asp-127.

The protein belongs to the HisA/HisF family.

It is found in the cytoplasm. The catalysed reaction is 1-(5-phospho-beta-D-ribosyl)-5-[(5-phospho-beta-D-ribosylamino)methylideneamino]imidazole-4-carboxamide = 5-[(5-phospho-1-deoxy-D-ribulos-1-ylimino)methylamino]-1-(5-phospho-beta-D-ribosyl)imidazole-4-carboxamide. The protein operates within amino-acid biosynthesis; L-histidine biosynthesis; L-histidine from 5-phospho-alpha-D-ribose 1-diphosphate: step 4/9. The polypeptide is 1-(5-phosphoribosyl)-5-[(5-phosphoribosylamino)methylideneamino] imidazole-4-carboxamide isomerase (Nautilia profundicola (strain ATCC BAA-1463 / DSM 18972 / AmH)).